The primary structure comprises 197 residues: Protein GrpE (197 aa).

The interval methionine 1 to arginine 40 is disordered.

Belongs to the GrpE family. Homodimer.

It localises to the cytoplasm. Its function is as follows. Participates actively in the response to hyperosmotic and heat shock by preventing the aggregation of stress-denatured proteins, in association with DnaK and GrpE. It is the nucleotide exchange factor for DnaK and may function as a thermosensor. Unfolded proteins bind initially to DnaJ; upon interaction with the DnaJ-bound protein, DnaK hydrolyzes its bound ATP, resulting in the formation of a stable complex. GrpE releases ADP from DnaK; ATP binding to DnaK triggers the release of the substrate protein, thus completing the reaction cycle. Several rounds of ATP-dependent interactions between DnaJ, DnaK and GrpE are required for fully efficient folding. This is Protein GrpE from Shigella flexneri serotype 5b (strain 8401).